Here is a 171-residue protein sequence, read N- to C-terminus: Shikimate kinase (171 aa).

Position 14–19 (14–19 (GAGKST)) interacts with ATP. Residue serine 18 participates in Mg(2+) binding. Positions 36, 60, and 82 each coordinate substrate. Arginine 120 serves as a coordination point for ATP. Arginine 139 is a binding site for substrate. Glutamine 156 provides a ligand contact to ATP.

The protein belongs to the shikimate kinase family. Monomer. It depends on Mg(2+) as a cofactor.

Its subcellular location is the cytoplasm. It carries out the reaction shikimate + ATP = 3-phosphoshikimate + ADP + H(+). The protein operates within metabolic intermediate biosynthesis; chorismate biosynthesis; chorismate from D-erythrose 4-phosphate and phosphoenolpyruvate: step 5/7. In terms of biological role, catalyzes the specific phosphorylation of the 3-hydroxyl group of shikimic acid using ATP as a cosubstrate. The polypeptide is Shikimate kinase (Shewanella putrefaciens (strain CN-32 / ATCC BAA-453)).